A 282-amino-acid polypeptide reads, in one-letter code: Trihydroxynaphthalene reductase (282 aa).

The NADP(+) site is built by Ile-41, Asn-114, and Arg-147. Active-site proton donor residues include Ser-164 and Tyr-178. NADP(+)-binding residues include Tyr-178, Lys-182, Ile-211, and Thr-213. Lys-182 acts as the Lowers pKa of active site Tyr in catalysis.

The protein belongs to the short-chain dehydrogenases/reductases (SDR) family. As to quaternary structure, homotetramer.

Its pathway is pigment biosynthesis; melanin biosynthesis. Its function is as follows. Catalyzes the NADPH-dependent reduction of 1,3,8-trihydroxynaphthalene (T3HN) into (-)-vermelone. Essential for appressorial penetration of colletotrichum lagenarium. This Colletotrichum orbiculare (strain 104-T / ATCC 96160 / CBS 514.97 / LARS 414 / MAFF 240422) (Cucumber anthracnose fungus) protein is Trihydroxynaphthalene reductase (THR1).